The sequence spans 68 residues: uncharacterized protein (68 aa).

The region spanning 2-67 (KTITLNIKGI…VIEDAGFDAT (66 aa)) is the HMA domain. The a metal cation site is built by C13 and C16.

This is an uncharacterized protein from Haemophilus influenzae (strain ATCC 51907 / DSM 11121 / KW20 / Rd).